The following is a 159-amino-acid chain: Cyclic pyranopterin monophosphate synthase (159 aa).

Substrate contacts are provided by residues 76–78 (LCH) and 114–115 (ME). D129 is a catalytic residue.

Belongs to the MoaC family. Homohexamer; trimer of dimers.

It catalyses the reaction (8S)-3',8-cyclo-7,8-dihydroguanosine 5'-triphosphate = cyclic pyranopterin phosphate + diphosphate. It functions in the pathway cofactor biosynthesis; molybdopterin biosynthesis. Catalyzes the conversion of (8S)-3',8-cyclo-7,8-dihydroguanosine 5'-triphosphate to cyclic pyranopterin monophosphate (cPMP). This chain is Cyclic pyranopterin monophosphate synthase, found in Clostridium botulinum (strain Alaska E43 / Type E3).